We begin with the raw amino-acid sequence, 159 residues long: HSP70 co-chaperone SNL1 (159 aa).

Over 1–12 the chain is Perinuclear space; the sequence is MSHNAMEHWKSK. The helical; Signal-anchor for type II membrane protein transmembrane segment at 13–35 threads the bilayer; that stretch reads LSKTSTSTYVLLAVIAVVFLVTI. The Cytoplasmic portion of the chain corresponds to 36-159; the sequence is RRPNGSKGKS…AMLKSLDSLK (124 aa). Residues 39–64 are disordered; sequence NGSKGKSSKKRASKKNKKGKNQFEKA. The segment covering 44-58 has biased composition (basic residues); the sequence is KSSKKRASKKNKKGK. Residues 73-159 form the BAG domain; that stretch reads QIDNVSLRYG…AMLKSLDSLK (87 aa).

Interacts with the HSP70 family members SSA1, SSA4, and SSB1. These interactions are strongly reduced by ADP and ATP.

Its subcellular location is the endoplasmic reticulum membrane. It is found in the nucleus membrane. In terms of biological role, stimulator of ATPase activity of molecular chaperones of the HSP70 family (principally of the SSA class). Stimulation is important for HSP70-substrate complex dissociation after folding of newly synthesized or refolded proteins. SNL1 is probably involved in nuclear pore biogenesis and in particular the folding or refolding of misfolded NUP116, GLE2 and NIC96. This Saccharomyces cerevisiae (strain ATCC 204508 / S288c) (Baker's yeast) protein is HSP70 co-chaperone SNL1 (SNL1).